Reading from the N-terminus, the 554-residue chain is Developmental and secondary metabolism regulator ve-1 (554 aa).

One can recognise a Velvet domain in the interval 31 to 230 (GRKLWYSLRV…AEQGCRVRIR (200 aa)). Positions 45 to 50 (LRARAC) match the Nuclear localization signal motif. Positions 166–175 (TKEDKDKDPE) are enriched in basic and acidic residues. Disordered regions lie at residues 166 to 190 (TKED…SFDF), 232 to 430 (DVRM…PHRL), and 465 to 528 (PRAY…VDDK). Residues 276-292 (RSMSGSTERTPYSSISD) show a composition bias toward polar residues. 2 stretches are compositionally biased toward pro residues: residues 363-372 (SYPPPPPPHQ) and 485-494 (LPPPPPPPPQ). The PEST stretch occupies residues 455 to 487 (SPSNMAAPPYPRAYSVSNSGGLTSAGGYNQLPP). Over residues 500–528 (RAHDQTFRADPEMRRYQDGARERESVDDK) the composition is skewed to basic and acidic residues.

The protein belongs to the velvet family. VeA subfamily. Component of the heterotrimeric velvet complex composed of lae-1, ve-1 and vel-2; Ve-1 acting as a bridging protein between lae-1 and vel-2.

Its subcellular location is the nucleus. The protein resides in the cytoplasm. Functionally, component of the velvet transcription factor complex that controls sexual/asexual developmental ratio in response to light, promoting sexual development in the darkness while stimulating asexual sporulation under illumination. The velvet complex hat acts as a global regulator for secondary metabolite gene expression. The sequence is that of Developmental and secondary metabolism regulator ve-1 from Neurospora crassa (strain ATCC 24698 / 74-OR23-1A / CBS 708.71 / DSM 1257 / FGSC 987).